A 240-amino-acid chain; its full sequence is Pyridoxine 5'-phosphate synthase (240 aa).

Residue asparagine 7 participates in 3-amino-2-oxopropyl phosphate binding. 9–10 is a 1-deoxy-D-xylulose 5-phosphate binding site; it reads DH. Arginine 18 serves as a coordination point for 3-amino-2-oxopropyl phosphate. Residue histidine 43 is the Proton acceptor of the active site. Residues arginine 45 and histidine 50 each coordinate 1-deoxy-D-xylulose 5-phosphate. Catalysis depends on glutamate 70, which acts as the Proton acceptor. Residue threonine 100 participates in 1-deoxy-D-xylulose 5-phosphate binding. The active-site Proton donor is the histidine 191. 3-amino-2-oxopropyl phosphate-binding positions include glycine 192 and 213–214; that span reads GH.

It belongs to the PNP synthase family. In terms of assembly, homooctamer; tetramer of dimers.

The protein localises to the cytoplasm. It catalyses the reaction 3-amino-2-oxopropyl phosphate + 1-deoxy-D-xylulose 5-phosphate = pyridoxine 5'-phosphate + phosphate + 2 H2O + H(+). It functions in the pathway cofactor biosynthesis; pyridoxine 5'-phosphate biosynthesis; pyridoxine 5'-phosphate from D-erythrose 4-phosphate: step 5/5. Its function is as follows. Catalyzes the complicated ring closure reaction between the two acyclic compounds 1-deoxy-D-xylulose-5-phosphate (DXP) and 3-amino-2-oxopropyl phosphate (1-amino-acetone-3-phosphate or AAP) to form pyridoxine 5'-phosphate (PNP) and inorganic phosphate. The polypeptide is Pyridoxine 5'-phosphate synthase (Cyanothece sp. (strain PCC 7425 / ATCC 29141)).